Consider the following 186-residue polypeptide: Peptidyl-tRNA hydrolase (186 aa).

Residue Y14 participates in tRNA binding. Residue H19 is the Proton acceptor of the active site. Residues Y64, N66, and N112 each contribute to the tRNA site.

This sequence belongs to the PTH family. As to quaternary structure, monomer.

It localises to the cytoplasm. The enzyme catalyses an N-acyl-L-alpha-aminoacyl-tRNA + H2O = an N-acyl-L-amino acid + a tRNA + H(+). Hydrolyzes ribosome-free peptidyl-tRNAs (with 1 or more amino acids incorporated), which drop off the ribosome during protein synthesis, or as a result of ribosome stalling. In terms of biological role, catalyzes the release of premature peptidyl moieties from peptidyl-tRNA molecules trapped in stalled 50S ribosomal subunits, and thus maintains levels of free tRNAs and 50S ribosomes. This Geobacillus thermodenitrificans (strain NG80-2) protein is Peptidyl-tRNA hydrolase.